A 275-amino-acid polypeptide reads, in one-letter code: Catechol 1,2-dioxygenase 2 (275 aa).

Positions 158, 192, 216, and 218 each coordinate Fe cation.

Belongs to the intradiol ring-cleavage dioxygenase family. In terms of assembly, homodimer. It depends on Fe(3+) as a cofactor.

The catalysed reaction is catechol + O2 = cis,cis-muconate + 2 H(+). The protein operates within aromatic compound metabolism; beta-ketoadipate pathway; 5-oxo-4,5-dihydro-2-furylacetate from catechol: step 1/3. Can cleave 4-methyl-, 4-chloro-, and 3-methoxycatechol at lower rates than catechol, but has no activity with 4-nitrocatechol or protocatechuic acid. The sequence is that of Catechol 1,2-dioxygenase 2 (catA2) from Acinetobacter lwoffii.